The chain runs to 422 residues: Enolase 2 (422 aa).

Gln162 is a binding site for (2R)-2-phosphoglycerate. Residue Glu204 is the Proton donor of the active site. Residues Asp241, Glu285, and Asp312 each contribute to the Mg(2+) site. Lys337, Arg366, Ser367, and Lys388 together coordinate (2R)-2-phosphoglycerate. Catalysis depends on Lys337, which acts as the Proton acceptor.

The protein belongs to the enolase family. Requires Mg(2+) as cofactor.

The protein localises to the cytoplasm. It localises to the secreted. Its subcellular location is the cell surface. The catalysed reaction is (2R)-2-phosphoglycerate = phosphoenolpyruvate + H2O. The protein operates within carbohydrate degradation; glycolysis; pyruvate from D-glyceraldehyde 3-phosphate: step 4/5. Functionally, catalyzes the reversible conversion of 2-phosphoglycerate (2-PG) into phosphoenolpyruvate (PEP). It is essential for the degradation of carbohydrates via glycolysis. This is Enolase 2 from Lactococcus lactis subsp. lactis (strain IL1403) (Streptococcus lactis).